The following is a 628-amino-acid chain: Propionate--CoA ligase (628 aa).

This sequence belongs to the ATP-dependent AMP-binding enzyme family.

It carries out the reaction propanoate + ATP + CoA = propanoyl-CoA + AMP + diphosphate. It participates in organic acid metabolism; propanoate degradation. Functionally, catalyzes the synthesis of propionyl-CoA from propionate and CoA. Also converts acetate to acetyl-CoA but with a lower specific activity. This chain is Propionate--CoA ligase (prpE), found in Salmonella typhimurium (strain LT2 / SGSC1412 / ATCC 700720).